A 232-amino-acid chain; its full sequence is Octanoyltransferase (232 aa).

One can recognise a BPL/LPL catalytic domain in the interval 44-219 (EHTGDELWVV…QLARQFGLVL (176 aa)). Substrate is bound by residues 83–90 (RGGQVTYH), 150–152 (ALG), and 163–165 (GLS). The Acyl-thioester intermediate role is filled by C181.

It belongs to the LipB family.

Its subcellular location is the cytoplasm. It catalyses the reaction octanoyl-[ACP] + L-lysyl-[protein] = N(6)-octanoyl-L-lysyl-[protein] + holo-[ACP] + H(+). The protein operates within protein modification; protein lipoylation via endogenous pathway; protein N(6)-(lipoyl)lysine from octanoyl-[acyl-carrier-protein]: step 1/2. In terms of biological role, catalyzes the transfer of endogenously produced octanoic acid from octanoyl-acyl-carrier-protein onto the lipoyl domains of lipoate-dependent enzymes. Lipoyl-ACP can also act as a substrate although octanoyl-ACP is likely to be the physiological substrate. This chain is Octanoyltransferase, found in Xanthomonas campestris pv. campestris (strain 8004).